We begin with the raw amino-acid sequence, 100 residues long: NADH-quinone oxidoreductase subunit K (100 aa).

3 helical membrane passes run 4–24 (LSHAFSLSIILFILGLIAIIV), 29–49 (LFILLGLEIMINAAASAFVIV), and 60–80 (IMYILVITLSASESAVSLALL).

The protein belongs to the complex I subunit 4L family. NDH-1 is composed of 13 different subunits. Subunits NuoA, H, J, K, L, M, N constitute the membrane sector of the complex.

It is found in the cell inner membrane. It carries out the reaction a quinone + NADH + 5 H(+)(in) = a quinol + NAD(+) + 4 H(+)(out). Functionally, NDH-1 shuttles electrons from NADH, via FMN and iron-sulfur (Fe-S) centers, to quinones in the respiratory chain. The immediate electron acceptor for the enzyme in this species is believed to be ubiquinone. Couples the redox reaction to proton translocation (for every two electrons transferred, four hydrogen ions are translocated across the cytoplasmic membrane), and thus conserves the redox energy in a proton gradient. The sequence is that of NADH-quinone oxidoreductase subunit K from Blochmanniella pennsylvanica (strain BPEN).